The primary structure comprises 300 residues: Metal tolerance protein 12 (300 aa).

At 1 to 26 (MESPESFSTMFMKPIRHILSEKKSRK) the chain is on the cytoplasmic side. The helical transmembrane segment at 27 to 47 (IALFLLINTAYMVVEFVAGFM) threads the bilayer. The Vacuolar segment spans residues 48-50 (SNS). A helical membrane pass occupies residues 51–71 (LGLISDACHMLFDCAALAIGL). Residues 72-91 (YASYISRLPANHQYNYGRGR) lie on the Cytoplasmic side of the membrane. Residues 92–112 (FEVLSGYVNAVFLVLVGALIV) traverse the membrane as a helical segment. Topologically, residues 113–128 (LESIERILDPQEISTN) are vacuolar. The helical transmembrane segment at 129–149 (SLLVVSVGGLLVNIVGLIFFH) threads the bilayer. At 150–160 (EEHHHAHGGSG) the chain is on the cytoplasmic side. The chain crosses the membrane as a helical span at residues 161-181 (IFLHVLADTMGSVGVVISTLL). The Vacuolar segment spans residues 182–186 (IKYKG). Residues 187–207 (WLVADPASSIFISILIIASVI) form a helical membrane-spanning segment. Residues 208–300 (PLLRNSAEIL…WTLQVESVNS (93 aa)) lie on the Cytoplasmic side of the membrane.

Belongs to the cation diffusion facilitator (CDF) transporter (TC 2.A.4) family. SLC30A subfamily.

Its subcellular location is the vacuole membrane. Its function is as follows. Involved in sequestration of excess metal in the cytoplasm into vacuoles to maintain metal homeostasis. The polypeptide is Metal tolerance protein 12 (MTP12) (Arabidopsis thaliana (Mouse-ear cress)).